Consider the following 286-residue polypeptide: MYVFDPTTEAGLRLEMAFPQHGFMFQQLHEDNSQDQLPSCPPHLFNGGGNYMMNRSMSLMNVQEDHNQTLDEENLSDDGAHTMLGEKKKRLQLEQVKALEKSFELGNKLEPERKIQLAKALGMQPRQIAIWFQNRRARWKTRQLERDYDSLKKQFESLKSDNASLLAYNKKLLAEVMALKNKECNEGNIVKREAEASWSNNGSTENSSDINLEMPRETITTHVNTIKDLFPSSIRSSAHDDDHHQNHEIVQEESLCNMFNGIDETTPAGYWAWSDPNHNHHHHQFN.

Residues 84–143 (LGEKKKRLQLEQVKALEKSFELGNKLEPERKIQLAKALGMQPRQIAIWFQNRRARWKTRQ) constitute a DNA-binding region (homeobox). The leucine-zipper stretch occupies residues 144-179 (LERDYDSLKKQFESLKSDNASLLAYNKKLLAEVMAL).

The protein belongs to the HD-ZIP homeobox family. Class I subfamily. In terms of tissue distribution, widely expressed.

The protein localises to the nucleus. Probable transcription factor. The chain is Homeobox-leucine zipper protein ATHB-20 (ATHB-20) from Arabidopsis thaliana (Mouse-ear cress).